We begin with the raw amino-acid sequence, 351 residues long: Cyanide hydratase (351 aa).

In terms of domain architecture, CN hydrolase spans 6-285 (YKAAAVTSEP…DGLLFVDIDL (280 aa)). E46 (proton acceptor) is an active-site residue. Residue K128 is part of the active site. The Nucleophile role is filled by C163.

It belongs to the carbon-nitrogen hydrolase superfamily. Nitrilase family. As to quaternary structure, oligomer of dimers, forming left-handed helical fibers with a diameter of 13 nm but with lengths ranging from approximately 1 um at the leading edge of the peak to having approximately the same length and diameter at the trailing edge.

It catalyses the reaction formamide = hydrogen cyanide + H2O. Catalyzes the hydration of cyanide to formamide. Degradation of cyanide may be important for plant pathogenic fungi in infection of cyanogenic plants. The chain is Cyanide hydratase from Neurospora crassa (strain ATCC 24698 / 74-OR23-1A / CBS 708.71 / DSM 1257 / FGSC 987).